The following is a 520-amino-acid chain: D-aminopeptidase (520 aa).

Ser-62 serves as the catalytic Nucleophile. The Proton donor/acceptor role is filled by Lys-65. The tract at residues 477 to 487 is important for specificity; the sequence is QRSMDAPSPGE. Asp-481 contacts substrate.

Belongs to the peptidase S12 family. In terms of assembly, homodimer.

It carries out the reaction Release of an N-terminal D-amino acid from a peptide, Xaa-|-Yaa-, in which Xaa is preferably D-Ala, D-Ser or D-Thr. D-amino acid amides and methyl esters also are hydrolyzed, as is glycine amide.. With respect to regulation, inhibited by beta-lactam compounds such as 6-aminopenicillic acid, 7-aminocephalosporanic acid, benzylpenicillin and ampicillin. Inhibited by p-chloromercuribenzoate. Functionally, hydrolyzes N-terminal residues in D-amino acid-containing peptides. In Brucella anthropi (strain ATCC 49188 / DSM 6882 / CCUG 24695 / JCM 21032 / LMG 3331 / NBRC 15819 / NCTC 12168 / Alc 37) (Ochrobactrum anthropi), this protein is D-aminopeptidase.